Consider the following 1499-residue polypeptide: Rho GTPase-activating protein 35 (1499 aa).

The has GTPase activity, required for proper localization stretch occupies residues 1–266 (MMMARKQDVR…IPYFEALKQQ (266 aa)). GTP contacts are provided by residues Lys28, 33-37 (IGKSC), Leu52, Ser56, 95-97 (EQT), 201-203 (KCD), and 229-231 (SAR). FF domains lie at 270–327 (IATA…HIHR), 368–422 (KLLE…HLEK), 429–483 (RAEM…HQKQ), and 485–550 (IDRA…HIHF). Tyr308 bears the Phosphotyrosine mark. Ser589 bears the Phosphoserine mark. Residues 592 to 767 (DLNIDRINLV…LLDSKRNLNL (176 aa)) enclose the pG1 pseudoGTPase domain. A phosphoserine mark is found at Ser770 and Ser773. Residues 783-947 (RIVMCLMCGD…FKDVVEKKNI (165 aa)) enclose the pG2 pseudoGTPase domain. A phosphoserine mark is found at Ser970, Ser975, Ser985, and Ser1072. Tyr1087 is modified (phosphotyrosine). A Phosphotyrosine; by ABL2 and PTK6 modification is found at Tyr1105. Over residues 1124 to 1141 (KAQSNGSGNGSDSEMDTS) the composition is skewed to polar residues. The segment at 1124–1148 (KAQSNGSGNGSDSEMDTSSLERGRK) is disordered. Residues Ser1134, Ser1142, Ser1150, Ser1176, Ser1179, and Ser1221 each carry the phosphoserine modification. Positions 1177–1207 (VGSDDELGPIRKKEEDQASQGYKGDNAVIPY) are disordered. Residues 1213–1236 (PRRRNILRSLRRNTKKPKPKPRPS) are required for phospholipid binding and regulation of the substrate preference. Thr1226 carries the phosphothreonine modification. Ser1236 carries the phosphoserine modification. The Rho-GAP domain occupies 1249-1436 (VPLTTVVTPE…LFIQQCPFFF (188 aa)). The segment at 1446–1499 (GAAPGSPSAMAPTVPFLTSTPATSQPSPPQSPPPTPQSPMQPLLSSQLQAEHTL) is disordered. The segment covering 1448 to 1470 (APGSPSAMAPTVPFLTSTPATSQ) has biased composition (low complexity). The segment covering 1471–1484 (PSPPQSPPPTPQSP) has biased composition (pro residues). Phosphoserine is present on residues Ser1472 and Ser1476. At Thr1480 the chain carries Phosphothreonine. The residue at position 1483 (Ser1483) is a Phosphoserine. The segment covering 1485-1499 (MQPLLSSQLQAEHTL) has biased composition (low complexity).

In terms of assembly, interacts with the general transcription factor GTF2I, the interaction sequesters GTF2I in the cytoplasm. Interacts with RASA1. Phosphorylation of Tyr-1105 by PTK6 promotes the association with RASA1, inactivating RHOA while activating RAS. Phosphorylation at Tyr-308 by PDGFRA inhibits binding to GTF2I. Phosphorylated by PRKCA at Ser-1221 and Thr-1226, induces relocalization from the cytoplasm to regions of plasma membrane ruffling and prevents the binding and substrate specificity regulation by phospholipids. In brain, phosphorylated by FYN and SRC. During focal adhesion formation, phosphorylated by MAPK1 and MAPK3 at the C-terminal region, probably at Ser-1451, Ser-1476, Thr-1480 and Ser-1483. Phosphorylation by MAPK1 and MAPK3 inhibits GAP function and localizes ARGHAP35 away from newly forming focal adhesions and stress fibers in cells spreading on fibronectin. Phosphorylation at Ser-1476 and Thr-1480 by GSK3B requires priming by MAPK and inhibits RhoGAP activity and modulates polarized cell migration. As to expression, expressed in the developing kidneys. Expressed in all regions of the mature nervous system (at protein level). Detected in neutrophils (at protein level).

It is found in the cytoplasm. The protein resides in the cytoskeleton. It localises to the cilium basal body. Its subcellular location is the nucleus. The protein localises to the cell membrane. In terms of biological role, rho GTPase-activating protein (GAP). Binds several acidic phospholipids which inhibits the Rho GAP activity to promote the Rac GAP activity. This binding is inhibited by phosphorylation by PRKCA. Involved in cell differentiation as well as cell adhesion and migration, plays an important role in retinal tissue morphogenesis, neural tube fusion, midline fusion of the cerebral hemispheres and mammary gland branching morphogenesis. Transduces signals from p21-ras to the nucleus, acting via the ras GTPase-activating protein (GAP). Transduces SRC-dependent signals from cell-surface adhesion molecules, such as laminin, to promote neurite outgrowth. Regulates axon outgrowth, guidance and fasciculation. Modulates Rho GTPase-dependent F-actin polymerization, organization and assembly, is involved in polarized cell migration and in the positive regulation of ciliogenesis and cilia elongation. During mammary gland development, is required in both the epithelial and stromal compartments for ductal outgrowth. Represses transcription of the glucocorticoid receptor by binding to the cis-acting regulatory sequence 5'-GAGAAAAGAAACTGGAGAAACTC-3'; this function is however unclear and would need additional experimental evidences. This is Rho GTPase-activating protein 35 from Mus musculus (Mouse).